The following is a 354-amino-acid chain: Serum paraoxonase/arylesterase 2 (354 aa).

Cys-42 and Cys-352 are disulfide-bonded. Ca(2+) is bound by residues Glu-53 and Asp-54. The active-site Proton acceptor is His-114. Residues Ile-116, Asn-167, Asp-168, and Asn-223 each contribute to the Ca(2+) site. Asn-254 carries an N-linked (GlcNAc...) asparagine glycan. 2 residues coordinate Ca(2+): Asp-268 and Asn-269. 2 N-linked (GlcNAc...) asparagine glycosylation sites follow: Asn-269 and Asn-323.

This sequence belongs to the paraoxonase family. Homotrimer. Ca(2+) is required as a cofactor. Post-translationally, glycosylated. The signal sequence is not cleaved.

Its subcellular location is the membrane. The enzyme catalyses a phenyl acetate + H2O = a phenol + acetate + H(+). It catalyses the reaction an N-acyl-L-homoserine lactone + H2O = an N-acyl-L-homoserine + H(+). Its function is as follows. Capable of hydrolyzing lactones and a number of aromatic carboxylic acid esters. The chain is Serum paraoxonase/arylesterase 2 (PON2) from Bos taurus (Bovine).